A 540-amino-acid chain; its full sequence is Probable G-protein coupled receptor 75 (540 aa).

Positions 1 to 15 (MNSTGHLQDAPNATS) are enriched in polar residues. Residues 1–27 (MNSTGHLQDAPNATSLHVPHSQEGNST) are disordered. The Extracellular segment spans residues 1–46 (MNSTGHLQDAPNATSLHVPHSQEGNSTSLQEGLQDLIHTATLVTCT). N-linked (GlcNAc...) asparagine glycosylation is found at Asn-2, Asn-12, and Asn-25. A helical transmembrane segment spans residues 47–67 (FLLAVIFCLGSYGNFIVFLSF). Residues 68–86 (FDPAFRKFRTNFDFMILNL) are Cytoplasmic-facing. A helical membrane pass occupies residues 87–107 (SFCDLFICGVTAPMFTFVLFF). Residues 108-120 (SSASSIPDAFCFT) are Extracellular-facing. A helical transmembrane segment spans residues 121-141 (FHLTSSGFIIMSLKTVAVIAL). Residues 142 to 160 (HRLRMVLGKQPNRTASFPC) are Cytoplasmic-facing. A helical membrane pass occupies residues 161-181 (TVLLTLLLWATSFTLATLATL). The Extracellular portion of the chain corresponds to 182 to 205 (KTSKSHLCLPMSSLIAGKGKAILS). A helical transmembrane segment spans residues 206–226 (LYVVDFTFCVAVVSVSYIMIA). Over 227–318 (QTLRKNAQVR…INLSTAKDSK (92 aa)) the chain is Cytoplasmic. A helical membrane pass occupies residues 319–339 (AVVTCVIIVLSVLVCCLPLGI). At 340–350 (SLVQVVLSSNG) the chain is on the extracellular side. The helical transmembrane segment at 351–371 (SFILYQFELFGFTLIFFKSGL) threads the bilayer. Over 372–540 (NPFIYSRNSA…SAKQIPVPSV (169 aa)) the chain is Cytoplasmic.

The protein belongs to the G-protein coupled receptor 1 family. In terms of tissue distribution, expressed at high levels in brain and spinal cord and at detectable levels in retinal pigment epithelium. In situ hybridization of adult eye sections localized transcripts only to the perivascular cells, surrounding retinal arterioles, in the ganglion cell/nerve fiber layer. Also expressed by islet cells (at protein level).

It is found in the cell membrane. G protein-coupled receptor that is activated by the chemokine CCL5/RANTES. Probably coupled to heterotrimeric Gq proteins, it stimulates inositol trisphosphate production and calcium mobilization upon activation. Together with CCL5/RANTES, may play a role in neuron survival through activation of a downstream signaling pathway involving the PI3, Akt and MAP kinases. CCL5/RANTES may also regulate insulin secretion by pancreatic islet cells through activation of this receptor. The protein is Probable G-protein coupled receptor 75 (GPR75) of Homo sapiens (Human).